A 638-amino-acid chain; its full sequence is Phosphomethylpyrimidine synthase (638 aa).

Substrate is bound by residues N236, M265, Y294, H330, 350–352 (SRG), 391–394 (DGLR), and E430. H434 is a binding site for Zn(2+). Y457 contributes to the substrate binding site. H498 is a binding site for Zn(2+). Positions 578, 581, and 586 each coordinate [4Fe-4S] cluster. The span at 608 to 624 (AEGASQQEAEQGMQEMS) shows a compositional bias: low complexity. Positions 608-633 (AEGASQQEAEQGMQEMSQKYKDAGRR) are disordered.

This sequence belongs to the ThiC family. Homodimer. Requires [4Fe-4S] cluster as cofactor.

It carries out the reaction 5-amino-1-(5-phospho-beta-D-ribosyl)imidazole + S-adenosyl-L-methionine = 4-amino-2-methyl-5-(phosphooxymethyl)pyrimidine + CO + 5'-deoxyadenosine + formate + L-methionine + 3 H(+). Its pathway is cofactor biosynthesis; thiamine diphosphate biosynthesis. In terms of biological role, catalyzes the synthesis of the hydroxymethylpyrimidine phosphate (HMP-P) moiety of thiamine from aminoimidazole ribotide (AIR) in a radical S-adenosyl-L-methionine (SAM)-dependent reaction. The sequence is that of Phosphomethylpyrimidine synthase from Hahella chejuensis (strain KCTC 2396).